The chain runs to 146 residues: Aminoglycoside N(6')-acetyltransferase type 1 (146 aa).

An N-acetyltransferase domain is found at 1–146 (MNIMPISESQ…RVVYFKKNIG (146 aa)). Substrate-binding residues include Trp22, His25, Tyr66, and Glu79. 81-83 (IFV) is a binding site for acetyl-CoA. Asp115 contributes to the substrate binding site. Asn120 lines the acetyl-CoA pocket. Residue Glu136 coordinates substrate.

Homodimer.

The catalysed reaction is kanamycin B + acetyl-CoA = N(6')-acetylkanamycin B + CoA + H(+). Functionally, catalyzes the transfer of an acetyl group from acetyl-CoA to the 6'-amino group of aminoglycoside molecules conferring resistance to antibiotics containing the purpurosamine ring including amikacin, kanamycin, tobramycin and netilmicin. In Acinetobacter baumannii, this protein is Aminoglycoside N(6')-acetyltransferase type 1.